The chain runs to 278 residues: Polyamine aminopropyltransferase (278 aa).

The 234-residue stretch at 5-238 folds into the PABS domain; sequence ELWFTEQQTP…GLWSFTMGSK (234 aa). Residue Q34 coordinates S-methyl-5'-thioadenosine. The spermidine site is built by H65 and D89. S-methyl-5'-thioadenosine contacts are provided by residues E109 and 140-141; that span reads DG. The Proton acceptor role is filled by D158. Residue 158 to 161 participates in spermidine binding; sequence DSTD. Position 165 (P165) interacts with S-methyl-5'-thioadenosine.

Belongs to the spermidine/spermine synthase family. In terms of assembly, homodimer or homotetramer.

The protein localises to the cytoplasm. It catalyses the reaction S-adenosyl 3-(methylsulfanyl)propylamine + putrescine = S-methyl-5'-thioadenosine + spermidine + H(+). It participates in amine and polyamine biosynthesis; spermidine biosynthesis; spermidine from putrescine: step 1/1. Its function is as follows. Catalyzes the irreversible transfer of a propylamine group from the amino donor S-adenosylmethioninamine (decarboxy-AdoMet) to putrescine (1,4-diaminobutane) to yield spermidine. The sequence is that of Polyamine aminopropyltransferase from Caldicellulosiruptor saccharolyticus (strain ATCC 43494 / DSM 8903 / Tp8T 6331).